We begin with the raw amino-acid sequence, 377 residues long: NADH dehydrogenase [ubiquinone] 1 alpha subcomplex subunit 9, mitochondrial (377 aa).

Residues 1–35 (MAAAVRFQVVRALPMSRPAISAAATSVFCSSSHRQ) constitute a mitochondrion transit peptide. Lys-175 is modified (N6-succinyllysine). Lys-189 and Lys-370 each carry N6-acetyllysine.

It belongs to the complex I NDUFA9 subunit family. Complex I is composed of 45 different subunits. This a component of the hydrophobic protein fraction. Interacts with BLOC1S1. Interacts with SLC2A4. Interacts with CLOCK. Interacts with RAB5IF. It depends on FAD as a cofactor. In terms of processing, acetylated on lysine residues. BLOC1S1 is required for acetylation. Acetylated by CLOCK in a circadian manner. As to expression, expressed by the principal cells of the epididymis. Detected in flagella of epididymal sperm (at protein level).

The protein localises to the mitochondrion matrix. In terms of biological role, accessory subunit of the mitochondrial membrane respiratory chain NADH dehydrogenase (Complex I), that is believed not to be involved in catalysis. Complex I functions in the transfer of electrons from NADH to the respiratory chain. The immediate electron acceptor for the enzyme is believed to be ubiquinone. The sequence is that of NADH dehydrogenase [ubiquinone] 1 alpha subcomplex subunit 9, mitochondrial from Rattus norvegicus (Rat).